The chain runs to 363 residues: Zinc finger CCCH domain-containing protein 53 (363 aa).

Residues 154–181 form a C3H1-type zinc finger; it reads KNRPKICSFYTIGQCKRGAECSFRHEMP. In terms of domain architecture, RRM spans 225–310; it reads KTLYVGGLNS…PPNEYSHYPS (86 aa). Residues 281–348 form a disordered region; that stretch reads LISQQQNQHS…SYSYPMPPHQ (68 aa). Positions 283-297 are enriched in low complexity; it reads SQQQNQHSQMQQYYM. A compositionally biased stretch (polar residues) spans 320–336; sequence FSTQESDGSSTSENNRA.

The sequence is that of Zinc finger CCCH domain-containing protein 53 from Arabidopsis thaliana (Mouse-ear cress).